A 497-amino-acid polypeptide reads, in one-letter code: Transcription termination/antitermination protein NusA (497 aa).

The 66-residue stretch at 135–200 (GKILTGIVKK…RGAQLFVTRS (66 aa)) folds into the S1 motif domain. Positions 302 to 372 (RHTIDIAVDS…LKIDQKISNI (71 aa)) constitute a KH domain. A run of 2 repeats spans residues 364–414 (KIDQ…KKAL) and 439–489 (GMNQ…RNIC). The tract at residues 364–489 (KIDQKISNIL…MLIMAARNIC (126 aa)) is 2 X 51 AA approximate repeats.

The protein belongs to the NusA family. In terms of assembly, monomer. Binds directly to the core enzyme of the DNA-dependent RNA polymerase and to nascent RNA.

It is found in the cytoplasm. Participates in both transcription termination and antitermination. This is Transcription termination/antitermination protein NusA from Buchnera aphidicola subsp. Baizongia pistaciae (strain Bp).